Consider the following 259-residue polypeptide: tRNA (guanine-N(7)-)-methyltransferase (259 aa).

The segment at 1–36 (MTFPSHNPPETGHPSAAPDEALPAAEAPVPGDPEAR) is disordered. Positions 14–29 (PSAAPDEALPAAEAPV) are enriched in low complexity. 4 residues coordinate S-adenosyl-L-methionine: glutamate 91, glutamate 116, aspartate 143, and aspartate 166. Residue aspartate 166 is part of the active site. Substrate contacts are provided by residues lysine 170, aspartate 202, and 237–240 (TKFE).

This sequence belongs to the class I-like SAM-binding methyltransferase superfamily. TrmB family.

The catalysed reaction is guanosine(46) in tRNA + S-adenosyl-L-methionine = N(7)-methylguanosine(46) in tRNA + S-adenosyl-L-homocysteine. Its pathway is tRNA modification; N(7)-methylguanine-tRNA biosynthesis. In terms of biological role, catalyzes the formation of N(7)-methylguanine at position 46 (m7G46) in tRNA. The polypeptide is tRNA (guanine-N(7)-)-methyltransferase (Aromatoleum aromaticum (strain DSM 19018 / LMG 30748 / EbN1) (Azoarcus sp. (strain EbN1))).